Consider the following 144-residue polypeptide: Small ribosomal subunit protein uS12 (144 aa).

A 3-methylthioaspartic acid modification is found at D103. The disordered stretch occupies residues 121 to 144 (VANRKQGRSKYGTKKASAVPAKKK).

It belongs to the universal ribosomal protein uS12 family. In terms of assembly, part of the 30S ribosomal subunit. Contacts proteins S8 and S17. May interact with IF1 in the 30S initiation complex.

With S4 and S5 plays an important role in translational accuracy. Functionally, interacts with and stabilizes bases of the 16S rRNA that are involved in tRNA selection in the A site and with the mRNA backbone. Located at the interface of the 30S and 50S subunits, it traverses the body of the 30S subunit contacting proteins on the other side and probably holding the rRNA structure together. The combined cluster of proteins S8, S12 and S17 appears to hold together the shoulder and platform of the 30S subunit. The chain is Small ribosomal subunit protein uS12 from Roseiflexus castenholzii (strain DSM 13941 / HLO8).